Consider the following 402-residue polypeptide: MRKLTILGATGSIGASTLKVIAQNPQQFSIVALVAGVNVAKMYQLCQQWRPKYAVMATASAASELQGLLKNQAMATEVLYGEEAMCQVAALDDVDTVMAAIVGAAGLLPTMAAVKAGKRVLLANKEALVMSGQLFIDAVAQSGAELMPVDSEHNAIFQCLPTEIQTQLGRCDLSQHGIDHILLTGSGGPFRYSDLATLDSVTPEQAIAHPNWSMGPKISVDSATMMNKGLEYIEAKWLFNTSREQLKVLIHPQSVIHSMVQYQDGSVIAQLGEPDMATPISYAMAYPERVTAGVPALDFTRLQQLTFMEVDFARYPCLQLAMDACFLGQHATTSLNAANEVAVDAFLKRKIRFTDIALINDQVLSKVCATNTQLHCRDLESLLELDTMARHFAHQVLKERQA.

Residues T10, G11, S12, I13, G36, N38, and N124 each coordinate NADPH. Position 125 (K125) interacts with 1-deoxy-D-xylulose 5-phosphate. E126 is an NADPH binding site. D150 provides a ligand contact to Mn(2+). S151, E152, S186, and H209 together coordinate 1-deoxy-D-xylulose 5-phosphate. E152 lines the Mn(2+) pocket. An NADPH-binding site is contributed by G215. Residues S222, N227, K228, and E231 each contribute to the 1-deoxy-D-xylulose 5-phosphate site. E231 contacts Mn(2+).

This sequence belongs to the DXR family. The cofactor is Mg(2+). Requires Mn(2+) as cofactor.

The enzyme catalyses 2-C-methyl-D-erythritol 4-phosphate + NADP(+) = 1-deoxy-D-xylulose 5-phosphate + NADPH + H(+). It functions in the pathway isoprenoid biosynthesis; isopentenyl diphosphate biosynthesis via DXP pathway; isopentenyl diphosphate from 1-deoxy-D-xylulose 5-phosphate: step 1/6. Catalyzes the NADPH-dependent rearrangement and reduction of 1-deoxy-D-xylulose-5-phosphate (DXP) to 2-C-methyl-D-erythritol 4-phosphate (MEP). This Vibrio cholerae serotype O1 (strain ATCC 39541 / Classical Ogawa 395 / O395) protein is 1-deoxy-D-xylulose 5-phosphate reductoisomerase.